Reading from the N-terminus, the 662-residue chain is Tubulin--tyrosine ligase-like protein 12 (662 aa).

The region spanning 324-660 (LKKRKIKVYA…LDEIDPTKVT (337 aa)) is the TTL domain. ATP-binding positions include 472 to 475 (CEYI), Lys491, and Asp493.

It belongs to the tubulin--tyrosine ligase family.

Regulates microtubule dynamics in uterine muscle cells. This is Tubulin--tyrosine ligase-like protein 12 from Caenorhabditis elegans.